The chain runs to 866 residues: Protein translocase subunit SecA (866 aa).

ATP contacts are provided by residues Q87, 105 to 109 (GEGKT), and D514. Residues 819 to 858 (VSPIGTPSSEGGGETSGADTYSNKKIGRNDPCPCGSGKKY) are disordered. Residues C850, C852, C861, and C862 each coordinate Zn(2+).

The protein belongs to the SecA family. As to quaternary structure, monomer and homodimer. Part of the essential Sec protein translocation apparatus which comprises SecA, SecYEG and auxiliary proteins SecDF. Other proteins may also be involved. Zn(2+) serves as cofactor.

Its subcellular location is the cell inner membrane. The protein localises to the cytoplasm. It carries out the reaction ATP + H2O + cellular proteinSide 1 = ADP + phosphate + cellular proteinSide 2.. In terms of biological role, part of the Sec protein translocase complex. Interacts with the SecYEG preprotein conducting channel. Has a central role in coupling the hydrolysis of ATP to the transfer of proteins into and across the cell membrane, serving as an ATP-driven molecular motor driving the stepwise translocation of polypeptide chains across the membrane. The polypeptide is Protein translocase subunit SecA (Elusimicrobium minutum (strain Pei191)).